The primary structure comprises 613 residues: Dihydroxy-acid dehydratase (613 aa).

Mg(2+) is bound at residue Asp81. Cys122 contributes to the [2Fe-2S] cluster binding site. 2 residues coordinate Mg(2+): Asp123 and Lys124. Lys124 bears the N6-carboxylysine mark. Cys195 lines the [2Fe-2S] cluster pocket. Glu491 serves as a coordination point for Mg(2+). Ser517 functions as the Proton acceptor in the catalytic mechanism.

The protein belongs to the IlvD/Edd family. In terms of assembly, homodimer. [2Fe-2S] cluster serves as cofactor. Mg(2+) is required as a cofactor.

The enzyme catalyses (2R)-2,3-dihydroxy-3-methylbutanoate = 3-methyl-2-oxobutanoate + H2O. It carries out the reaction (2R,3R)-2,3-dihydroxy-3-methylpentanoate = (S)-3-methyl-2-oxopentanoate + H2O. It participates in amino-acid biosynthesis; L-isoleucine biosynthesis; L-isoleucine from 2-oxobutanoate: step 3/4. It functions in the pathway amino-acid biosynthesis; L-valine biosynthesis; L-valine from pyruvate: step 3/4. Its function is as follows. Functions in the biosynthesis of branched-chain amino acids. Catalyzes the dehydration of (2R,3R)-2,3-dihydroxy-3-methylpentanoate (2,3-dihydroxy-3-methylvalerate) into 2-oxo-3-methylpentanoate (2-oxo-3-methylvalerate) and of (2R)-2,3-dihydroxy-3-methylbutanoate (2,3-dihydroxyisovalerate) into 2-oxo-3-methylbutanoate (2-oxoisovalerate), the penultimate precursor to L-isoleucine and L-valine, respectively. In Hyphomonas neptunium (strain ATCC 15444), this protein is Dihydroxy-acid dehydratase.